Here is a 516-residue protein sequence, read N- to C-terminus: 2-isopropylmalate synthase (516 aa).

Positions 8 to 270 constitute a Pyruvate carboxyltransferase domain; the sequence is IYIFDTTLRD…YTGIKTESIY (263 aa). 4 residues coordinate Mn(2+): Asp17, His205, His207, and Asn241. Positions 394–516 are regulatory domain; the sequence is KLIYLNVVSG…DAGKIKSEYE (123 aa).

Belongs to the alpha-IPM synthase/homocitrate synthase family. LeuA type 1 subfamily. As to quaternary structure, homodimer. Mn(2+) is required as a cofactor.

Its subcellular location is the cytoplasm. The catalysed reaction is 3-methyl-2-oxobutanoate + acetyl-CoA + H2O = (2S)-2-isopropylmalate + CoA + H(+). It participates in amino-acid biosynthesis; L-leucine biosynthesis; L-leucine from 3-methyl-2-oxobutanoate: step 1/4. Functionally, catalyzes the condensation of the acetyl group of acetyl-CoA with 3-methyl-2-oxobutanoate (2-ketoisovalerate) to form 3-carboxy-3-hydroxy-4-methylpentanoate (2-isopropylmalate). The protein is 2-isopropylmalate synthase of Syntrophus aciditrophicus (strain SB).